The chain runs to 98 residues: Co-chaperonin GroES (98 aa).

The protein belongs to the GroES chaperonin family. As to quaternary structure, heptamer of 7 subunits arranged in a ring. Interacts with the chaperonin GroEL.

The protein resides in the cytoplasm. In terms of biological role, together with the chaperonin GroEL, plays an essential role in assisting protein folding. The GroEL-GroES system forms a nano-cage that allows encapsulation of the non-native substrate proteins and provides a physical environment optimized to promote and accelerate protein folding. GroES binds to the apical surface of the GroEL ring, thereby capping the opening of the GroEL channel. The polypeptide is Co-chaperonin GroES (Rhizobium leguminosarum bv. trifolii (strain WSM2304)).